Reading from the N-terminus, the 436-residue chain is Gamma-glutamyl phosphate reductase (436 aa).

The protein belongs to the gamma-glutamyl phosphate reductase family.

The protein resides in the cytoplasm. It carries out the reaction L-glutamate 5-semialdehyde + phosphate + NADP(+) = L-glutamyl 5-phosphate + NADPH + H(+). It functions in the pathway amino-acid biosynthesis; L-proline biosynthesis; L-glutamate 5-semialdehyde from L-glutamate: step 2/2. In terms of biological role, catalyzes the NADPH-dependent reduction of L-glutamate 5-phosphate into L-glutamate 5-semialdehyde and phosphate. The product spontaneously undergoes cyclization to form 1-pyrroline-5-carboxylate. In Prochlorococcus marinus (strain MIT 9515), this protein is Gamma-glutamyl phosphate reductase.